We begin with the raw amino-acid sequence, 211 residues long: Glutathione S-transferase class-mu 28 kDa isozyme (211 aa).

Residues 4–86 (DHIKVIYFNG…YMAKKHHMMG (83 aa)) enclose the GST N-terminal domain. Residues tyrosine 10, arginine 16, tryptophan 41, lysine 45, leucine 53, glutamate 70, serine 71, and aspartate 104 each contribute to the glutathione site. A GST C-terminal domain is found at 88 to 211 (TDEEYYNVEK…YLSDRAATPF (124 aa)).

Belongs to the GST superfamily. Mu family. In terms of assembly, homodimer.

It catalyses the reaction RX + glutathione = an S-substituted glutathione + a halide anion + H(+). Conjugation of reduced glutathione to a wide number of exogenous and endogenous hydrophobic electrophiles. Its function is as follows. GST isoenzymes appear to play a central role in the parasite detoxification system. Other functions are also suspected including a role in increasing the solubility of haematin in the parasite gut. The sequence is that of Glutathione S-transferase class-mu 28 kDa isozyme from Schistosoma bovis (Blood fluke).